Consider the following 512-residue polypeptide: Maturase K (512 aa).

This sequence belongs to the intron maturase 2 family. MatK subfamily.

It localises to the plastid. The protein resides in the chloroplast. Usually encoded in the trnK tRNA gene intron. Probably assists in splicing its own and other chloroplast group II introns. In Lemna minor (Common duckweed), this protein is Maturase K.